A 126-amino-acid chain; its full sequence is Holo-[acyl-carrier-protein] synthase (126 aa).

The Mg(2+) site is built by Asp-9 and Glu-58.

It belongs to the P-Pant transferase superfamily. AcpS family. Mg(2+) serves as cofactor.

It is found in the cytoplasm. It catalyses the reaction apo-[ACP] + CoA = holo-[ACP] + adenosine 3',5'-bisphosphate + H(+). Transfers the 4'-phosphopantetheine moiety from coenzyme A to a Ser of acyl-carrier-protein. This is Holo-[acyl-carrier-protein] synthase from Pectobacterium atrosepticum (strain SCRI 1043 / ATCC BAA-672) (Erwinia carotovora subsp. atroseptica).